Reading from the N-terminus, the 330-residue chain is uncharacterized protein (330 aa).

125–132 (GPPGCGKT) lines the ATP pocket.

It belongs to the AAA ATPase family.

This is an uncharacterized protein from Sinorhizobium fredii (strain NBRC 101917 / NGR234).